Consider the following 130-residue polypeptide: Small ribosomal subunit protein uS8 (130 aa).

It belongs to the universal ribosomal protein uS8 family. Part of the 30S ribosomal subunit. Contacts proteins S5 and S12.

In terms of biological role, one of the primary rRNA binding proteins, it binds directly to 16S rRNA central domain where it helps coordinate assembly of the platform of the 30S subunit. In Ectopseudomonas mendocina (strain ymp) (Pseudomonas mendocina), this protein is Small ribosomal subunit protein uS8.